Reading from the N-terminus, the 1141-residue chain is Eukaryotic translation initiation factor 3 subunit A (1141 aa).

The PCI domain occupies 319–501 (LQRMAAHVLL…NSIYFGTDLT (183 aa)). 2 stretches are compositionally biased toward basic and acidic residues: residues 588-623 (QNNAREEEEARRQEEESRKAKLAEQKRLEQEQEERE) and 829-899 (AAEE…RGGD). Disordered regions lie at residues 588–631 (QNNA…QNEI) and 829–1141 (AAEE…VKRR). S908 is modified (phosphoserine). 4 stretches are compositionally biased toward basic and acidic residues: residues 920–976 (ERND…EPDT), 990–1051 (SRDD…EPQR), 1059–1087 (DAPRHADRENRRPAGERRDRDVRETRGDQ), and 1110–1131 (TREEKPAAKRDQAQEKENKAGD).

Belongs to the eIF-3 subunit A family. As to quaternary structure, component of the eukaryotic translation initiation factor 3 (eIF-3) complex. The eIF-3 complex interacts with pix.

It localises to the cytoplasm. Functionally, RNA-binding component of the eukaryotic translation initiation factor 3 (eIF-3) complex, which is involved in protein synthesis of a specialized repertoire of mRNAs and, together with other initiation factors, stimulates binding of mRNA and methionyl-tRNAi to the 40S ribosome. The eIF-3 complex specifically targets and initiates translation of a subset of mRNAs involved in cell proliferation. The polypeptide is Eukaryotic translation initiation factor 3 subunit A (Drosophila sechellia (Fruit fly)).